The following is a 61-amino-acid chain: Potassium channel toxin alpha-KTx 15.6 (61 aa).

The N-terminal stretch at 1–23 (MKAFYGMLVIFILCSTCYISVDS) is a signal peptide. The residue at position 24 (Q24) is a Pyrrolidone carboxylic acid. Cystine bridges form between C31–C52, C37–C57, and C41–C59.

This sequence belongs to the short scorpion toxin superfamily. Potassium channel inhibitor family. Alpha-KTx 15 subfamily. Expressed by the venom gland.

It localises to the secreted. Functionally, irreversibly blocks the A-type voltage-gated potassium channels in rat cerebellum granular cells (190 nM induce 50% inhibitory effect) (IC(50)=190 nM). Also weakly inhibits Kv1.2/KCNA2 and Kv1.3/KCNA3. The chain is Potassium channel toxin alpha-KTx 15.6 from Tityus discrepans (Venezuelan scorpion).